Consider the following 296-residue polypeptide: Phosphatidylserine decarboxylase proenzyme (296 aa).

Catalysis depends on charge relay system; for autoendoproteolytic cleavage activity residues aspartate 92, histidine 149, and serine 251. Serine 251 (schiff-base intermediate with substrate; via pyruvic acid; for decarboxylase activity) is an active-site residue. Residue serine 251 is modified to Pyruvic acid (Ser); by autocatalysis.

The protein belongs to the phosphatidylserine decarboxylase family. PSD-B subfamily. Prokaryotic type I sub-subfamily. Heterodimer of a large membrane-associated beta subunit and a small pyruvoyl-containing alpha subunit. Pyruvate is required as a cofactor. Post-translationally, is synthesized initially as an inactive proenzyme. Formation of the active enzyme involves a self-maturation process in which the active site pyruvoyl group is generated from an internal serine residue via an autocatalytic post-translational modification. Two non-identical subunits are generated from the proenzyme in this reaction, and the pyruvate is formed at the N-terminus of the alpha chain, which is derived from the carboxyl end of the proenzyme. The autoendoproteolytic cleavage occurs by a canonical serine protease mechanism, in which the side chain hydroxyl group of the serine supplies its oxygen atom to form the C-terminus of the beta chain, while the remainder of the serine residue undergoes an oxidative deamination to produce ammonia and the pyruvoyl prosthetic group on the alpha chain. During this reaction, the Ser that is part of the protease active site of the proenzyme becomes the pyruvoyl prosthetic group, which constitutes an essential element of the active site of the mature decarboxylase.

The protein resides in the cell membrane. The catalysed reaction is a 1,2-diacyl-sn-glycero-3-phospho-L-serine + H(+) = a 1,2-diacyl-sn-glycero-3-phosphoethanolamine + CO2. It functions in the pathway phospholipid metabolism; phosphatidylethanolamine biosynthesis; phosphatidylethanolamine from CDP-diacylglycerol: step 2/2. Its function is as follows. Catalyzes the formation of phosphatidylethanolamine (PtdEtn) from phosphatidylserine (PtdSer). In Hahella chejuensis (strain KCTC 2396), this protein is Phosphatidylserine decarboxylase proenzyme.